Consider the following 727-residue polypeptide: DNA topoisomerase 3 (727 aa).

Residues K3 to T136 enclose the Toprim domain. Positions 9 and 105 each coordinate Mg(2+). A Topo IA-type catalytic domain is found at F153–I592. The tract at residues S187–Q192 is interaction with DNA. Y310 acts as the O-(5'-phospho-DNA)-tyrosine intermediate in catalysis. Over residues R685–P711 the composition is skewed to basic and acidic residues. The segment at R685–N713 is disordered.

It belongs to the type IA topoisomerase family. Mg(2+) is required as a cofactor.

It catalyses the reaction ATP-independent breakage of single-stranded DNA, followed by passage and rejoining.. Its function is as follows. Releases the supercoiling and torsional tension of DNA, which is introduced during the DNA replication and transcription, by transiently cleaving and rejoining one strand of the DNA duplex. Introduces a single-strand break via transesterification at a target site in duplex DNA. The scissile phosphodiester is attacked by the catalytic tyrosine of the enzyme, resulting in the formation of a DNA-(5'-phosphotyrosyl)-enzyme intermediate and the expulsion of a 3'-OH DNA strand. The free DNA strand then undergoes passage around the unbroken strand, thus removing DNA supercoils. Finally, in the religation step, the DNA 3'-OH attacks the covalent intermediate to expel the active-site tyrosine and restore the DNA phosphodiester backbone. The sequence is that of DNA topoisomerase 3 from Bacillus licheniformis (strain ATCC 14580 / DSM 13 / JCM 2505 / CCUG 7422 / NBRC 12200 / NCIMB 9375 / NCTC 10341 / NRRL NRS-1264 / Gibson 46).